The following is a 1030-amino-acid chain: Protein phosphatase 1 regulatory subunit 12A (1030 aa).

The KVKF motif signature appears at 35–38 (KVKF). 6 ANK repeats span residues 39–68 (DDGA…DINY), 72–101 (DGLT…NINQ), 105–134 (EGWI…HVGA), 138–164 (EGDT…RQGV), 198–227 (SGGT…DVNI), and 231–260 (DGWT…DMEM). Residues N67 and N100 each carry the (3S)-3-hydroxyasparagine; by HIF1AN; partial modification. N226 carries the (3S)-3-hydroxyasparagine; by HIF1AN; partial modification. Disordered stretches follow at residues 290–628 (LHSE…SVPT) and 643–928 (ASTT…EKDD). A compositionally biased stretch (basic and acidic residues) spans 291-300 (HSEKRDKKSP). S299 carries the phosphoserine modification. Residues 302-316 (IESTANMDNNQSQKT) show a composition bias toward polar residues. Positions 318 to 340 (KNKETLIIEPEKNASRIESLEQE) are enriched in basic and acidic residues. Residues 357–369 (SEEDEEDDSESEA) are compositionally biased toward acidic residues. Over residues 385-402 (TSSTQAAPVAVTTPTVSS) the composition is skewed to low complexity. S422 and S432 each carry phosphoserine. A compositionally biased stretch (basic and acidic residues) spans 422–432 (SPKEEERKDES). A Phosphothreonine modification is found at T443. S445 is subject to Phosphoserine; by NUAK1. The residue at position 446 (Y446) is a Phosphotyrosine. Residues 469–480 (RSASSPRLSSSL) are compositionally biased toward low complexity. S472 carries the phosphoserine; by NUAK1 modification. Position 473 is a phosphoserine; by CDK1 (S473). S477 is modified (phosphoserine). Residues 481–491 (DNKEKEKDSKG) are compositionally biased toward basic and acidic residues. Phosphoserine occurs at positions 507 and 509. A compositionally biased stretch (polar residues) spans 540–551 (NSSVNEGSTYHK). Over residues 564–610 (SSSVPSTTSTPTVTSAAGLQKSLLSSTSTTTKITTGSSSAGTQSSTS) the composition is skewed to low complexity. Residues S601 and S618 each carry the phosphoserine modification. Basic and acidic residues predominate over residues 614-625 (WAEDSTEKEKDS). Residues 643 to 660 (ASTTTLTTTTAGTVSSTT) are compositionally biased toward low complexity. The span at 673–682 (VRDEESESQR) shows a compositional bias: basic and acidic residues. The interaction with ROCK2 stretch occupies residues 682 to 864 (RKARSRQARQ…VSFWTQDSDE (183 aa)). Residues 683-693 (KARSRQARQSR) are compositionally biased toward basic residues. Residues S692 and S695 each carry the phosphoserine; by PKA and PKG; in vitro modification. T696 is subject to Phosphothreonine; by ROCK1, ROCK2, CDC42BP, ZIPK/DAPK3 and RAF1. A compositionally biased stretch (basic and acidic residues) spans 718-767 (RTREQENEEKEKEEKEKQDKEKQEEKKESETSREDEYKQKYSRTYDETYQ). Low complexity predominate over residues 773-795 (STSSSTTPSSSLSTMSSSLYASS). The span at 796-810 (QLNRPNSLVGITSAY) shows a compositional bias: polar residues. Position 802 is a phosphoserine (S802). Over residues 814–840 (ITKENEREGEKREEEKEGEDKSQPKSI) the composition is skewed to basic and acidic residues. The span at 841–852 (RERRRPREKRRS) shows a compositional bias: basic residues. S852 carries the post-translational modification Phosphoserine; by ROCK2. Over residues 861-875 (DSDENEQEQQSDTEE) the composition is skewed to acidic residues. S862 and S871 each carry phosphoserine. Residues 884–897 (TDSISRYETSSTSA) are compositionally biased toward polar residues. 2 positions are modified to phosphoserine: S903 and S908. Low complexity predominate over residues 903–913 (SLLGRSGSYSY). The residue at position 910 (S910) is a Phosphoserine; by NUAK1. The span at 914 to 928 (LEERKPYSSRLEKDD) shows a compositional bias: basic and acidic residues. Residue S995 is modified to Phosphoserine.

As to quaternary structure, PP1 comprises a catalytic subunit, PPP1CA, PPP1CB or PPP1CC, and one or several targeting or regulatory subunits. PPP1R12A mediates binding to myosin. Interacts with ARHA and CIT. Binds PPP1R12B, ROCK1 and IL16. Interacts directly with PRKG1. Non-covalent dimer of 2 dimers; PRKG1-PRKG1 and PPP1R12A-PPP1R12A. Interacts with SMTNL1. Interacts with PPP1CB; the interaction is direct. Interacts (when phosphorylated at Ser-445, Ser-472 and Ser-910) with 14-3-3. Interacts with ROCK1 and ROCK2. Interacts with isoform 1 and isoform 2 of ZIPK/DAPK3. Interacts with RAF1. Interacts with HIF1AN. Interacts with NCKAP1L. In terms of processing, phosphorylated by CIT (Rho-associated kinase). Phosphorylated cooperatively by ROCK1 and CDC42BP on Thr-696. Phosphorylated on upon DNA damage, probably by ATM or ATR. In vitro, phosphorylation of Ser-695 by PKA and PKG appears to prevent phosphorylation of the inhibitory site Thr-696, probably mediated by PRKG1. Phosphorylation at Ser-445, Ser-472 and Ser-910 by NUAK1 promotes interaction with 14-3-3, leading to inhibit interaction with myosin light chain MLC2, preventing dephosphorylation of MLC2. May be phosphorylated at Thr-696 by DMPK; may inhibit the myosin phosphatase activity. Phosphorylated at Ser-473 by CDK1 during mitosis, creating docking sites for the POLO box domains of PLK1. Subsequently, PLK1 binds and phosphorylates PPP1R12A. Expressed in striated muscles, specifically in type 2a fibers (at protein level).

It is found in the cytoplasm. The protein localises to the cytoskeleton. Its subcellular location is the stress fiber. Key regulator of protein phosphatase 1C (PPP1C). Mediates binding to myosin. As part of the PPP1C complex, involved in dephosphorylation of PLK1. Capable of inhibiting HIF1AN-dependent suppression of HIF1A activity. The sequence is that of Protein phosphatase 1 regulatory subunit 12A from Homo sapiens (Human).